We begin with the raw amino-acid sequence, 595 residues long: Sulfite reductase [NADPH] flavoprotein alpha-component (595 aa).

The region spanning 59 to 197 is the Flavodoxin-like domain; sequence ITVLSASQTG…KADIWRREIV (139 aa). FMN is bound by residues 65-70, 112-115, and 148-157; these read SQTGNA, STQG, and LGDSSYTYFA. An FAD-binding FR-type domain is found at 230 to 444; it reads EEPFTAHLVV…IEHNDNFRLP (215 aa). Residues T318, F352, 382 to 385, 400 to 402, Y406, and 415 to 418 contribute to the FAD site; these read RLYS, TVS, and GGAS. NADP(+) is bound by residues 515 to 516, 521 to 525, and D557; these read SQ and KIYVQ. Y595 lines the FAD pocket.

It belongs to the NADPH-dependent sulphite reductase flavoprotein subunit CysJ family. This sequence in the N-terminal section; belongs to the flavodoxin family. In the C-terminal section; belongs to the flavoprotein pyridine nucleotide cytochrome reductase family. Alpha(8)-beta(8). The alpha component is a flavoprotein, the beta component is a hemoprotein. It depends on FAD as a cofactor. FMN is required as a cofactor.

It carries out the reaction hydrogen sulfide + 3 NADP(+) + 3 H2O = sulfite + 3 NADPH + 4 H(+). The protein operates within sulfur metabolism; hydrogen sulfide biosynthesis; hydrogen sulfide from sulfite (NADPH route): step 1/1. Functionally, component of the sulfite reductase complex that catalyzes the 6-electron reduction of sulfite to sulfide. This is one of several activities required for the biosynthesis of L-cysteine from sulfate. The flavoprotein component catalyzes the electron flow from NADPH -&gt; FAD -&gt; FMN to the hemoprotein component. The sequence is that of Sulfite reductase [NADPH] flavoprotein alpha-component from Baumannia cicadellinicola subsp. Homalodisca coagulata.